Here is a 348-residue protein sequence, read N- to C-terminus: Dihydroorotase (348 aa).

Positions 17 and 19 each coordinate Zn(2+). Residues 19–21 (HLR) and N45 contribute to the substrate site. 3 residues coordinate Zn(2+): K103, H140, and H178. K103 carries the N6-carboxylysine modification. H140 lines the substrate pocket. L223 is a substrate binding site. D251 is a Zn(2+) binding site. Residue D251 is part of the active site. Substrate-binding residues include H255 and A267.

This sequence belongs to the metallo-dependent hydrolases superfamily. DHOase family. Class II DHOase subfamily. Homodimer. The cofactor is Zn(2+).

It catalyses the reaction (S)-dihydroorotate + H2O = N-carbamoyl-L-aspartate + H(+). The protein operates within pyrimidine metabolism; UMP biosynthesis via de novo pathway; (S)-dihydroorotate from bicarbonate: step 3/3. Catalyzes the reversible cyclization of carbamoyl aspartate to dihydroorotate. This Salmonella paratyphi B (strain ATCC BAA-1250 / SPB7) protein is Dihydroorotase.